The sequence spans 150 residues: MTRKQKRLAIIGGGVGFLTAAVLLVMFAFSQAVAYFYVPGDLTKADVAPGTRIRLGGLVEAGSVKRGEGRTITFKVTDTLATVPVTYTGILPDLFREGQGVVAEGAFVGGSPVFVADTVLAKHDETYMPKDVADRLKAQGVTLGGEENIR.

Residues 1–7 (MTRKQKR) are Cytoplasmic-facing. A helical; Signal-anchor for type II membrane protein membrane pass occupies residues 8 to 28 (LAIIGGGVGFLTAAVLLVMFA). At 29-150 (FSQAVAYFYV…VTLGGEENIR (122 aa)) the chain is on the periplasmic side. Positions 123 and 127 each coordinate heme.

It belongs to the CcmE/CycJ family.

The protein resides in the cell inner membrane. Heme chaperone required for the biogenesis of c-type cytochromes. Transiently binds heme delivered by CcmC and transfers the heme to apo-cytochromes in a process facilitated by CcmF and CcmH. This Sinorhizobium medicae (strain WSM419) (Ensifer medicae) protein is Cytochrome c-type biogenesis protein CcmE.